Reading from the N-terminus, the 270-residue chain is NADPH-dependent aldehyde reductase-like protein, chloroplastic (270 aa).

Residues 1–53 (MSTHSSISQPPLPLAGRVAIVTGSSRGIGRAIAIHLAELGARIVINYTSKAAD) constitute a chloroplast transit peptide. Residue 26-50 (RGIGRAIAIHLAELGARIVINYTSK) coordinates NADP(+). S165 is a substrate binding site. The active-site Proton acceptor is Y178.

The protein belongs to the short-chain dehydrogenases/reductases (SDR) family.

It is found in the plastid. It localises to the chloroplast. In terms of biological role, aldehyde reductase that catalyzes the reduction of the aldehyde carbonyl groups on saturated and alpha,beta-unsaturated aldehydes with more than 5 carbons. The sequence is that of NADPH-dependent aldehyde reductase-like protein, chloroplastic from Arabidopsis thaliana (Mouse-ear cress).